Here is a 549-residue protein sequence, read N- to C-terminus: Cytoplasmic trehalase (549 aa).

Residues Arg-168, 175–176 (WD), Asn-212, 221–223 (RSQ), 292–294 (RDE), and Gly-324 contribute to the substrate site. Residues Asp-326 and Glu-509 each act as proton donor/acceptor in the active site. Position 525 (Glu-525) interacts with substrate.

Belongs to the glycosyl hydrolase 37 family. In terms of assembly, monomer.

Its subcellular location is the cytoplasm. The catalysed reaction is alpha,alpha-trehalose + H2O = alpha-D-glucose + beta-D-glucose. It participates in glycan degradation; trehalose degradation; D-glucose from alpha,alpha-trehalose: step 1/1. Hydrolyzes trehalose to glucose. Could be involved, in cells returning to low osmolarity conditions, in the utilization of the accumulated cytoplasmic trehalose, which was synthesized in response to high osmolarity. The polypeptide is Cytoplasmic trehalase (Escherichia coli O81 (strain ED1a)).